Consider the following 37-residue polypeptide: Large ribosomal subunit protein bL36 (37 aa).

The protein belongs to the bacterial ribosomal protein bL36 family.

This chain is Large ribosomal subunit protein bL36, found in Gloeothece citriformis (strain PCC 7424) (Cyanothece sp. (strain PCC 7424)).